Reading from the N-terminus, the 91-residue chain is Small ribosomal subunit protein uS19 (91 aa).

The protein belongs to the universal ribosomal protein uS19 family.

Functionally, protein S19 forms a complex with S13 that binds strongly to the 16S ribosomal RNA. This chain is Small ribosomal subunit protein uS19, found in Acinetobacter baumannii (strain AB307-0294).